A 289-amino-acid chain; its full sequence is Ketose 3-epimerase (289 aa).

Glu146 functions as the Proton donor/acceptor in the catalytic mechanism. Residue Glu146 participates in Mn(2+) binding. Substrate contacts are provided by residues Glu152 and 179 to 182; that span reads DTYH. Mn(2+) contacts are provided by Asp179 and His205. Arg211 provides a ligand contact to substrate. Catalysis depends on Glu240, which acts as the Proton donor/acceptor. A Mn(2+)-binding site is contributed by Glu240.

Belongs to the hyi family. As to quaternary structure, homotetramer. Mg(2+) is required as a cofactor. The cofactor is Mn(2+). It depends on Co(2+) as a cofactor.

It carries out the reaction L-ribulose = L-xylulose. It catalyses the reaction D-allulose = keto-D-fructose. The enzyme catalyses keto-L-tagatose = keto-L-sorbose. The catalysed reaction is D-ribulose = D-xylulose. It carries out the reaction L-allulose = keto-L-fructose. It catalyses the reaction keto-D-tagatose = keto-D-sorbose. Functionally, catalyzes the reversible C-3 epimerization of several ketoses. Shows the highest enzymatic activity for the epimerization of L-ribulose to L-xylulose. Is also able to convert D-allulose (also known as D-psicose) to D-fructose and, to a lesser extent, L-tagatose to L-sorbose, D-ribulose to D-xylulose, L-allulose to L-fructose and D-tagatose to D-sorbose. This chain is Ketose 3-epimerase, found in Arthrobacter globiformis.